We begin with the raw amino-acid sequence, 276 residues long: Non-heme chloroperoxidase (276 aa).

The AB hydrolase-1 domain occupies 24-254 (PVVFHHGWPL…NATLKSYEGL (231 aa)). Catalysis depends on residues Ser97, Asp227, and His256.

This sequence belongs to the AB hydrolase superfamily. Bacterial non-heme haloperoxidase / perhydrolase family. As to quaternary structure, homodimer.

The polypeptide is Non-heme chloroperoxidase (cpo) (Streptomyces lividans).